The following is a 439-amino-acid chain: C4-dicarboxylate transport protein (439 aa).

Transmembrane regions (helical) follow at residues 10–30, 45–65, 77–97, 145–165, 185–205, 223–243, 290–310, 332–352, and 353–373; these read LYVQ…FYPP, LIKM…IAGM, LALL…LVLV, AFAK…GFAL, VLFA…FGAM, LMGT…GTIT, VVGL…AIYL, TLLA…GSGF, and IVLA…LALI. The tract at residues 415-439 is disordered; sequence LNGQTAEEASAPQALPDRMESRIHH.

Belongs to the dicarboxylate/amino acid:cation symporter (DAACS) (TC 2.A.23) family.

The protein localises to the cell inner membrane. Responsible for the transport of dicarboxylates such as succinate, fumarate, and malate from the periplasm across the membrane. The sequence is that of C4-dicarboxylate transport protein from Verminephrobacter eiseniae (strain EF01-2).